We begin with the raw amino-acid sequence, 78 residues long: Vacuolar ATPase assembly integral membrane protein VMA21 (78 aa).

The Cytoplasmic segment spans residues 1-14 (MPADIPKSVVQKLV). The chain crosses the membrane as a helical span at residues 15–35 (FFTAAMIICPVATFFICQYLF). Residues 36–38 (SNN) are Lumenal-facing. A helical membrane pass occupies residues 39–59 (AIISGGVSALVANIVLIGYVV). At 60–78 (AAFMEDTTEQEPEETKKSR) the chain is on the cytoplasmic side. Residues 75–78 (KKSR) carry the Prevents secretion from ER motif.

Belongs to the VMA21 family.

Its subcellular location is the endoplasmic reticulum membrane. The protein resides in the endoplasmic reticulum-Golgi intermediate compartment membrane. It localises to the cytoplasmic vesicle. The protein localises to the COPII-coated vesicle membrane. Required for the assembly of the V0 complex of the vacuolar ATPase (V-ATPase) in the endoplasmic reticulum. This is Vacuolar ATPase assembly integral membrane protein VMA21 from Debaryomyces hansenii (strain ATCC 36239 / CBS 767 / BCRC 21394 / JCM 1990 / NBRC 0083 / IGC 2968) (Yeast).